Consider the following 289-residue polypeptide: ATP synthase subunit gamma, mitochondrial (289 aa).

This sequence belongs to the ATPase gamma chain family. F-type ATPases have 2 components, CF(1) - the catalytic core - and CF(0) - the membrane proton channel. CF(1) has five subunits: alpha(3), beta(3), gamma(1), delta(1), epsilon(1). CF(0) has three main subunits: a, b and c.

Its subcellular location is the mitochondrion. The protein localises to the mitochondrion inner membrane. Functionally, mitochondrial membrane ATP synthase (F(1)F(0) ATP synthase or Complex V) produces ATP from ADP in the presence of a proton gradient across the membrane which is generated by electron transport complexes of the respiratory chain. F-type ATPases consist of two structural domains, F(1) - containing the extramembraneous catalytic core, and F(0) - containing the membrane proton channel, linked together by a central stalk and a peripheral stalk. During catalysis, ATP synthesis in the catalytic domain of F(1) is coupled via a rotary mechanism of the central stalk subunits to proton translocation. Part of the complex F(1) domain and the central stalk which is part of the complex rotary element. The gamma subunit protrudes into the catalytic domain formed of alpha(3)beta(3). Rotation of the central stalk against the surrounding alpha(3)beta(3) subunits leads to hydrolysis of ATP in three separate catalytic sites on the beta subunits. The sequence is that of ATP synthase subunit gamma, mitochondrial (ATP3) from Kluyveromyces lactis (strain ATCC 8585 / CBS 2359 / DSM 70799 / NBRC 1267 / NRRL Y-1140 / WM37) (Yeast).